The chain runs to 65 residues: Large ribosomal subunit protein bL35 (65 aa).

2 disordered regions span residues 1–23 (MPKI…GKVK) and 29–48 (GSHI…RQSH). Residues 33–43 (LAKKSRKRKRD) show a composition bias toward basic residues.

The protein belongs to the bacterial ribosomal protein bL35 family.

The protein is Large ribosomal subunit protein bL35 of Desulfatibacillum aliphaticivorans.